The chain runs to 661 residues: Fructose-1,6-bisphosphatase class 3 (661 aa).

The protein belongs to the FBPase class 3 family. Mn(2+) is required as a cofactor.

It carries out the reaction beta-D-fructose 1,6-bisphosphate + H2O = beta-D-fructose 6-phosphate + phosphate. It participates in carbohydrate biosynthesis; gluconeogenesis. The protein is Fructose-1,6-bisphosphatase class 3 of Clostridioides difficile (strain 630) (Peptoclostridium difficile).